The sequence spans 157 residues: MRILGIDPGSRKCGYAIVSHTSNKLSLITAGFINITTTRLQEQILDLIEALDCLLDRYEVHEVAIEDIFFGYNPKSVIKLAQFRGALSLKILERIGNFSEYTPLQVKKALTGNGKAAKEQVAFMVKRLLNITSEIKPLDISDAIAVAITHAQRLKPH.

Catalysis depends on residues aspartate 7, glutamate 66, and aspartate 139. Residues aspartate 7, glutamate 66, and aspartate 139 each coordinate Mg(2+).

Belongs to the RuvC family. Homodimer which binds Holliday junction (HJ) DNA. The HJ becomes 2-fold symmetrical on binding to RuvC with unstacked arms; it has a different conformation from HJ DNA in complex with RuvA. In the full resolvosome a probable DNA-RuvA(4)-RuvB(12)-RuvC(2) complex forms which resolves the HJ. The cofactor is Mg(2+).

The protein localises to the cytoplasm. It carries out the reaction Endonucleolytic cleavage at a junction such as a reciprocal single-stranded crossover between two homologous DNA duplexes (Holliday junction).. In terms of biological role, the RuvA-RuvB-RuvC complex processes Holliday junction (HJ) DNA during genetic recombination and DNA repair. Endonuclease that resolves HJ intermediates. Cleaves cruciform DNA by making single-stranded nicks across the HJ at symmetrical positions within the homologous arms, yielding a 5'-phosphate and a 3'-hydroxyl group; requires a central core of homology in the junction. The consensus cleavage sequence is 5'-(A/T)TT(C/G)-3'. Cleavage occurs on the 3'-side of the TT dinucleotide at the point of strand exchange. HJ branch migration catalyzed by RuvA-RuvB allows RuvC to scan DNA until it finds its consensus sequence, where it cleaves and resolves the cruciform DNA. In Helicobacter pylori (strain Shi470), this protein is Crossover junction endodeoxyribonuclease RuvC.